Reading from the N-terminus, the 310-residue chain is MSFSDYISRIKDNIRNSIKGKAIIAVSGGQDSSLLSLLASEVLGNNLLCVFIDTGLLRKNETGRVKDFFEKHSMNYVIVDAADTFINNLKGVTDPEEKRKIIGKTFIDVLSEQAQNFGAEYLLQGTIAPDWIESGGQKRDTIKSHHNVGGLPKDMKLKLVEPLRDYYKDEIRGMSKELGLPTDIQPFPGPGLAVRIIGEVTKEKLDLLRAVTDIVERKISEAMPSESRPWQYFAVLLPVRTTGVHGDRRAYGLTVGIRMIETTDAMTGTFSKPSWDLLEDISNTITDEIPEINRVVYDITNKPPATIEWE.

Residues 1–187 (MSFSDYISRI…LGLPTDIQPF (187 aa)) form the GMPS ATP-PPase domain. 27 to 33 (SGGQDSS) contributes to the ATP binding site.

In terms of assembly, heterodimer composed of a glutamine amidotransferase subunit (A) and a GMP-binding subunit (B).

The catalysed reaction is XMP + L-glutamine + ATP + H2O = GMP + L-glutamate + AMP + diphosphate + 2 H(+). The protein operates within purine metabolism; GMP biosynthesis; GMP from XMP (L-Gln route): step 1/1. Catalyzes the synthesis of GMP from XMP. This chain is GMP synthase [glutamine-hydrolyzing] subunit B (guaAB), found in Thermoplasma volcanium (strain ATCC 51530 / DSM 4299 / JCM 9571 / NBRC 15438 / GSS1).